The chain runs to 240 residues: MGHESPLYSLDLFGHEMIFDLSSMLMLTVTAAIVFLIAMLFTRNLSVRPHGKQNFIEWIFDFTRGIINSNMAWNKGGRFHFLAVTLLLFIFVANMLGLPFAIINGHTLWWKSPTADPTVTLTLSTLMVLLTHFYGVKMRGTGNYLKSFAQPVWFMVPFKIIEEFSSTLTLGLRLYGNIFAGEVLLGLLATLGTAGAAGMLGAAIPTLIWQGFSIFVGSIQAYIFVMLSMVYMSHKVSDDH.

5 consecutive transmembrane segments (helical) span residues 21–41 (LSSM…AMLF), 83–103 (AVTL…FAII), 116–136 (DPTV…FYGV), 184–204 (LLGL…GAAI), and 207–227 (LIWQ…FVML).

It belongs to the ATPase A chain family. In terms of assembly, F-type ATPases have 2 components, CF(1) - the catalytic core - and CF(0) - the membrane proton channel. CF(1) has five subunits: alpha(3), beta(3), gamma(1), delta(1), epsilon(1). CF(0) has three main subunits: a(1), b(2) and c(9-12). The alpha and beta chains form an alternating ring which encloses part of the gamma chain. CF(1) is attached to CF(0) by a central stalk formed by the gamma and epsilon chains, while a peripheral stalk is formed by the delta and b chains.

It localises to the cell membrane. In terms of biological role, key component of the proton channel; it plays a direct role in the translocation of protons across the membrane. This is ATP synthase subunit a from Macrococcus caseolyticus (strain JCSC5402) (Macrococcoides caseolyticum).